The primary structure comprises 332 residues: Ferredoxin--NADP reductase 2 (332 aa).

7 residues coordinate FAD: Glu37, Gln45, Tyr50, Val90, Phe124, Asp285, and Thr326.

It belongs to the ferredoxin--NADP reductase type 2 family. As to quaternary structure, homodimer. It depends on FAD as a cofactor.

It carries out the reaction 2 reduced [2Fe-2S]-[ferredoxin] + NADP(+) + H(+) = 2 oxidized [2Fe-2S]-[ferredoxin] + NADPH. The sequence is that of Ferredoxin--NADP reductase 2 (yumC) from Bacillus subtilis (strain 168).